A 320-amino-acid chain; its full sequence is Methionyl-tRNA formyltransferase (320 aa).

112-115 serves as a coordination point for (6S)-5,6,7,8-tetrahydrofolate; sequence SILP.

This sequence belongs to the Fmt family.

The catalysed reaction is L-methionyl-tRNA(fMet) + (6R)-10-formyltetrahydrofolate = N-formyl-L-methionyl-tRNA(fMet) + (6S)-5,6,7,8-tetrahydrofolate + H(+). Attaches a formyl group to the free amino group of methionyl-tRNA(fMet). The formyl group appears to play a dual role in the initiator identity of N-formylmethionyl-tRNA by promoting its recognition by IF2 and preventing the misappropriation of this tRNA by the elongation apparatus. This chain is Methionyl-tRNA formyltransferase, found in Shewanella woodyi (strain ATCC 51908 / MS32).